The chain runs to 236 residues: tRNA1(Val) (adenine(37)-N6)-methyltransferase (236 aa).

Belongs to the methyltransferase superfamily. tRNA (adenine-N(6)-)-methyltransferase family.

Its subcellular location is the cytoplasm. It catalyses the reaction adenosine(37) in tRNA1(Val) + S-adenosyl-L-methionine = N(6)-methyladenosine(37) in tRNA1(Val) + S-adenosyl-L-homocysteine + H(+). Specifically methylates the adenine in position 37 of tRNA(1)(Val) (anticodon cmo5UAC). The sequence is that of tRNA1(Val) (adenine(37)-N6)-methyltransferase from Aeromonas salmonicida (strain A449).